Reading from the N-terminus, the 270-residue chain is Phosphatidylglycerol--prolipoprotein diacylglyceryl transferase (270 aa).

4 consecutive transmembrane segments (helical) span residues 19 to 39, 56 to 76, 92 to 112, and 116 to 136; these read FPVY…LWLA, LVLI…VIFE, QGGL…ILFA, and GVSF…GQAI. Residue Arg-138 participates in a 1,2-diacyl-sn-glycero-3-phospho-(1'-sn-glycerol) binding. Transmembrane regions (helical) follow at residues 178–198, 206–226, and 236–256; these read HPTF…LLAL, GELF…VEGL, and LRIA…FIIV.

The protein belongs to the Lgt family.

The protein localises to the cell membrane. It carries out the reaction L-cysteinyl-[prolipoprotein] + a 1,2-diacyl-sn-glycero-3-phospho-(1'-sn-glycerol) = an S-1,2-diacyl-sn-glyceryl-L-cysteinyl-[prolipoprotein] + sn-glycerol 1-phosphate + H(+). It functions in the pathway protein modification; lipoprotein biosynthesis (diacylglyceryl transfer). Its function is as follows. Catalyzes the transfer of the diacylglyceryl group from phosphatidylglycerol to the sulfhydryl group of the N-terminal cysteine of a prolipoprotein, the first step in the formation of mature lipoproteins. The sequence is that of Phosphatidylglycerol--prolipoprotein diacylglyceryl transferase from Bacillus anthracis (strain A0248).